Consider the following 830-residue polypeptide: MDGKTDVKSLMAKFNTGSNPTEEVSTSSRPFKVAGQNSPSGIQSKKNLFDNQGNASPPAGPSNMSKFGTTKPPLAAKPTYEEKSEKEPKPPFLKPTGVSPRFGTQPNSVSRDPEVKVGFLKPVSPKPTSLTKEDSKPVILRPPGNKLHNLNQESDLKTLGPKPGSTPPVPENDLKPGFSKIAGAKSKFMPAPQDADSKPRFPRHTYGQKPSLSTEDAQEEESIPKNTPVQKGSPVQLGAKSRGSPFKPAKEDPEDKDHGTPSSPFAGVVLKPAASRGSPGLSKNSEEKKEERKTDIPKNIFLNKLNQEEPARFPKAPSKLTAGTPWGQSQEKEGDKDSATPKQKPLPPLSVLGPPPSKPSRPPNVDLTRFRKADSANSSNKSQTPYSTTSLPPPPPTQPASQPPLPASHPAHLPAPSLPPRNIKPPLDLKHPINEENQDGVMHSDGTGNLEEEQESDGEMYEDIESSKERDKKREKEEKKRLELERKEQKEREKKEQELRKKFKLTGPIQVIHHAKACCDVKGGKNELSFKQGEDIEIIRITDNPEGKWLGRTARGSYGYIKTTAVKIDYDSLKRKKNTINAVPPRPVEEDQDVYDDVAEQDAPNSHSQSGSGGMFPPPPADDDIYDGIEEEDADDGSVPQVDEKTNAWSWGILKMLKGKDERKKSIREKPKVSESDSNEGSSFPSPHKQLDVGEEVYDDVDASDFPPPPAEMSQGMSVGKTKAEEKDPKKLKKQEKEEKDLRKKFKYDGEIRVLYSTKVASSLTSKKWGTRDLQIKPGESLEVIQSTDDTKVLCRNEEGKYGYVLRSYLVDNDGEIYDDIADGCIYDND.

The disordered stretch occupies residues 1–501; that stretch reads MDGKTDVKSL…REKKEQELRK (501 aa). Position 13 is an N6-acetyllysine (lysine 13). A compositionally biased stretch (polar residues) spans 15-55; it reads NTGSNPTEEVSTSSRPFKVAGQNSPSGIQSKKNLFDNQGNA. Phosphoserine occurs at positions 38 and 56. A compositionally biased stretch (basic and acidic residues) spans 79 to 89; sequence TYEEKSEKEPK. The residue at position 233 (serine 233) is a Phosphoserine. 2 stretches are compositionally biased toward basic and acidic residues: residues 248-259 and 284-296; these read PAKEDPEDKDHG and NSEE…KTDI. Serine 329 is subject to Phosphoserine. Basic and acidic residues predominate over residues 330–339; it reads QEKEGDKDSA. Composition is skewed to pro residues over residues 344-362 and 391-407; these read KPLP…PSRP and LPPP…PLPA. Positions 347–447 are interaction with SKAP1; that stretch reads PPLSVLGPPP…QDGVMHSDGT (101 aa). A compositionally biased stretch (acidic residues) spans 450-464; the sequence is LEEEQESDGEMYEDI. Phosphoserine is present on serine 456. Positions 461-464 match the SH2-binding motif; that stretch reads YEDI. The segment covering 465–500 has biased composition (basic and acidic residues); sequence ESSKERDKKREKEEKKRLELERKEQKEREKKEQELR. Residues 465–502 are a coiled coil; sequence ESSKERDKKREKEEKKRLELERKEQKEREKKEQELRKK. A Nuclear localization signal motif is present at residues 479–486; sequence KKRLELER. The SH3 1 domain occupies 510–571; it reads QVIHHAKACC…KTTAVKIDYD (62 aa). The residue at position 570 (tyrosine 570) is a Phosphotyrosine. Residue serine 572 is modified to Phosphoserine. Residues 595–598 carry the SH2-binding; to LCP2 motif; that stretch reads YDDV. Disordered regions lie at residues 601-646 and 660-739; these read QDAP…DEKT and KDER…EKEE. Residues 621-636 are compositionally biased toward acidic residues; it reads ADDDIYDGIEEEDADD. The SH2-binding; to FYN motif lies at 626-629; sequence YDGI. The span at 660–675 shows a compositional bias: basic and acidic residues; sequence KDERKKSIREKPKVSE. Over residues 693–703 the composition is skewed to acidic residues; the sequence is VGEEVYDDVDA. Phosphotyrosine is present on tyrosine 698. Positions 722–739 are enriched in basic and acidic residues; it reads TKAEEKDPKKLKKQEKEE. Positions 732–739 match the Nuclear localization signal motif; sequence LKKQEKEE. The region spanning 747–815 is the SH3 2 domain; sequence KYDGEIRVLY…LRSYLVDNDG (69 aa).

Part of a complex consisting of SKAP2, FYB1 and PTPNS1. Part of a complex consisting of SKAP2, FYB1 and LILRB3. Part of a complex consisting of SKAP1, FYB1 and CLNK. Interacts with CLNK (via its SH2 domain) and FYN; this interaction allows SKAP1 and FYB1 to recruit FYN to the complex, thus promoting the phosphorylation of CLNK by FYN. Interacts with FYN. Interacts with LCP2. Interacts with SKAP1. Interacts with SKAP2. Interacts with FASLG. Interacts with EVL. Interacts with TMEM47. Interacts with LCK. T-cell receptor ligation leads to increased tyrosine phosphorylation.

Its subcellular location is the cytoplasm. The protein resides in the nucleus. It is found in the cell junction. Functionally, acts as an adapter protein of the FYN and LCP2 signaling cascades in T-cells. May play a role in linking T-cell signaling to remodeling of the actin cytoskeleton. Modulates the expression of IL2. Involved in platelet activation. Prevents the degradation of SKAP1 and SKAP2. May be involved in high affinity immunoglobulin epsilon receptor signaling in mast cells. The polypeptide is FYN-binding protein 1 (Rattus norvegicus (Rat)).